A 321-amino-acid chain; its full sequence is Peroxidase 42 (321 aa).

The first 29 residues, 1-29, serve as a signal peptide directing secretion; that stretch reads MATSSGSCLIISLLVVVVAAALSASTASA. At Q30 the chain carries Pyrrolidone carboxylic acid. Intrachain disulfides connect C40/C118, C73/C78, C124/C315, and C202/C227. Catalysis depends on H71, which acts as the Proton acceptor. Residues D72, I75, G77, D79, and S81 each coordinate Ca(2+). N-linked (GlcNAc...) asparagine glycosylation is found at N85 and N96. Position 165 (P165) interacts with substrate. H195 contacts heme b. Residue T196 coordinates Ca(2+). N211 is a glycosylation site (N-linked (GlcNAc...) asparagine). Ca(2+)-binding residues include D239, T242, and G247. A glycan (N-linked (GlcNAc...) asparagine) is linked at N270.

This sequence belongs to the peroxidase family. Classical plant (class III) peroxidase subfamily. Heme b is required as a cofactor. Ca(2+) serves as cofactor.

Its subcellular location is the secreted. It catalyses the reaction 2 a phenolic donor + H2O2 = 2 a phenolic radical donor + 2 H2O. Removal of H(2)O(2), oxidation of toxic reductants, biosynthesis and degradation of lignin, suberization, auxin catabolism, response to environmental stresses such as wounding, pathogen attack and oxidative stress. These functions might be dependent on each isozyme/isoform in each plant tissue. This is Peroxidase 42 (PER42) from Zea mays (Maize).